Consider the following 61-residue polypeptide: Small ribosomal subunit protein uS14 (61 aa).

Cys-24, Cys-27, Cys-40, and Cys-43 together coordinate Zn(2+).

It belongs to the universal ribosomal protein uS14 family. Zinc-binding uS14 subfamily. In terms of assembly, part of the 30S ribosomal subunit. Contacts proteins S3 and S10. The cofactor is Zn(2+).

Functionally, binds 16S rRNA, required for the assembly of 30S particles and may also be responsible for determining the conformation of the 16S rRNA at the A site. In Desulfotalea psychrophila (strain LSv54 / DSM 12343), this protein is Small ribosomal subunit protein uS14.